Reading from the N-terminus, the 406-residue chain is Cysteine desulfurase (406 aa).

The residue at position 226 (Lys-226) is an N6-(pyridoxal phosphate)lysine. Cys-364 acts as the Cysteine persulfide intermediate in catalysis.

It belongs to the class-V pyridoxal-phosphate-dependent aminotransferase family. Csd subfamily. As to quaternary structure, homodimer. Interacts with SufE and the SufBCD complex composed of SufB, SufC and SufD. The interaction with SufE is required to mediate the direct transfer of the sulfur atom from the S-sulfanylcysteine. It depends on pyridoxal 5'-phosphate as a cofactor.

Its subcellular location is the cytoplasm. The catalysed reaction is (sulfur carrier)-H + L-cysteine = (sulfur carrier)-SH + L-alanine. The enzyme catalyses L-selenocysteine + AH2 = hydrogenselenide + L-alanine + A + H(+). The protein operates within cofactor biosynthesis; iron-sulfur cluster biosynthesis. Its function is as follows. Cysteine desulfurases mobilize the sulfur from L-cysteine to yield L-alanine, an essential step in sulfur metabolism for biosynthesis of a variety of sulfur-containing biomolecules. Component of the suf operon, which is activated and required under specific conditions such as oxidative stress and iron limitation. Acts as a potent selenocysteine lyase in vitro, that mobilizes selenium from L-selenocysteine. Selenocysteine lyase activity is however unsure in vivo. The polypeptide is Cysteine desulfurase (Salmonella agona (strain SL483)).